The sequence spans 282 residues: Putative phosphatase MPN_383 (282 aa).

Catalysis depends on Asp-11, which acts as the Nucleophile. Asp-11 is a binding site for Mg(2+). Leu-12 serves as a coordination point for phosphate. Asp-13 is a binding site for Mg(2+). Residues 45-46 (TG) and Lys-207 contribute to the phosphate site. Mg(2+) is bound at residue Asp-230. Residue Asn-233 participates in phosphate binding.

Belongs to the HAD-like hydrolase superfamily. Cof family. Mg(2+) serves as cofactor.

The sequence is that of Putative phosphatase MPN_383 from Mycoplasma pneumoniae (strain ATCC 29342 / M129 / Subtype 1) (Mycoplasmoides pneumoniae).